A 274-amino-acid polypeptide reads, in one-letter code: Rhamnulose-1-phosphate aldolase (274 aa).

Glu-117 is a catalytic residue. 3 residues coordinate Zn(2+): His-141, His-143, and His-212.

It belongs to the aldolase class II family. RhaD subfamily. Homotetramer. The cofactor is Zn(2+).

The protein resides in the cytoplasm. It catalyses the reaction L-rhamnulose 1-phosphate = (S)-lactaldehyde + dihydroxyacetone phosphate. The protein operates within carbohydrate degradation; L-rhamnose degradation; glycerone phosphate from L-rhamnose: step 3/3. Its function is as follows. Catalyzes the reversible cleavage of L-rhamnulose-1-phosphate to dihydroxyacetone phosphate (DHAP) and L-lactaldehyde. This chain is Rhamnulose-1-phosphate aldolase, found in Yersinia pseudotuberculosis serotype I (strain IP32953).